Consider the following 250-residue polypeptide: uncharacterized protein (250 aa).

Residues 4–24 form a helical membrane-spanning segment; that stretch reads FKYLLFLVVFAVFFLTFAFFD.

It is found in the membrane. This is an uncharacterized protein from Methanocaldococcus jannaschii (strain ATCC 43067 / DSM 2661 / JAL-1 / JCM 10045 / NBRC 100440) (Methanococcus jannaschii).